The following is a 133-amino-acid chain: Large ribosomal subunit protein bL21 (133 aa).

A disordered region spans residues 1–22; sequence MAEKPAAKPKAAAAKAEAKDQS.

The protein belongs to the bacterial ribosomal protein bL21 family. As to quaternary structure, part of the 50S ribosomal subunit. Contacts protein L20.

In terms of biological role, this protein binds to 23S rRNA in the presence of protein L20. The chain is Large ribosomal subunit protein bL21 from Prochlorococcus marinus (strain MIT 9303).